Here is a 637-residue protein sequence, read N- to C-terminus: Threonine--tRNA ligase (637 aa).

The 61-residue stretch at 1–61 (MPNVKLPDGN…KEDCSLIIVT (61 aa)) folds into the TGS domain. A catalytic region spans residues 242 to 533 (DHRKLGKALD…LIEHYAGKLP (292 aa)). Residues Cys-333, His-384, and His-510 each coordinate Zn(2+).

It belongs to the class-II aminoacyl-tRNA synthetase family. As to quaternary structure, homodimer. The cofactor is Zn(2+).

Its subcellular location is the cytoplasm. It catalyses the reaction tRNA(Thr) + L-threonine + ATP = L-threonyl-tRNA(Thr) + AMP + diphosphate + H(+). In terms of biological role, catalyzes the attachment of threonine to tRNA(Thr) in a two-step reaction: L-threonine is first activated by ATP to form Thr-AMP and then transferred to the acceptor end of tRNA(Thr). Also edits incorrectly charged L-seryl-tRNA(Thr). The polypeptide is Threonine--tRNA ligase (Legionella pneumophila subsp. pneumophila (strain Philadelphia 1 / ATCC 33152 / DSM 7513)).